Consider the following 888-residue polypeptide: Valine--tRNA ligase (888 aa).

The 'HIGH' region signature appears at 43 to 53 (PNVTGTLHLGH). Residues 538–542 (KMSKS) carry the 'KMSKS' region motif. Lys-541 lines the ATP pocket. Residues 821–888 (LIDLDAERAR…RLKAALGRLA (68 aa)) are a coiled coil.

The protein belongs to the class-I aminoacyl-tRNA synthetase family. ValS type 1 subfamily. As to quaternary structure, monomer.

The protein resides in the cytoplasm. It carries out the reaction tRNA(Val) + L-valine + ATP = L-valyl-tRNA(Val) + AMP + diphosphate. Catalyzes the attachment of valine to tRNA(Val). As ValRS can inadvertently accommodate and process structurally similar amino acids such as threonine, to avoid such errors, it has a 'posttransfer' editing activity that hydrolyzes mischarged Thr-tRNA(Val) in a tRNA-dependent manner. This Gluconobacter oxydans (strain 621H) (Gluconobacter suboxydans) protein is Valine--tRNA ligase.